A 497-amino-acid chain; its full sequence is Probable cytosol aminopeptidase (497 aa).

2 residues coordinate Mn(2+): Lys267 and Asp272. Lys279 is a catalytic residue. Residues Asp290, Asp349, and Glu351 each contribute to the Mn(2+) site. Residue Arg353 is part of the active site.

Belongs to the peptidase M17 family. Requires Mn(2+) as cofactor.

The protein localises to the cytoplasm. The catalysed reaction is Release of an N-terminal amino acid, Xaa-|-Yaa-, in which Xaa is preferably Leu, but may be other amino acids including Pro although not Arg or Lys, and Yaa may be Pro. Amino acid amides and methyl esters are also readily hydrolyzed, but rates on arylamides are exceedingly low.. The enzyme catalyses Release of an N-terminal amino acid, preferentially leucine, but not glutamic or aspartic acids.. Functionally, presumably involved in the processing and regular turnover of intracellular proteins. Catalyzes the removal of unsubstituted N-terminal amino acids from various peptides. The polypeptide is Probable cytosol aminopeptidase (Pseudomonas putida (strain W619)).